Here is a 212-residue protein sequence, read N- to C-terminus: Maleylacetoacetate isomerase (212 aa).

The 83-residue stretch at 1–83 (MKLYTYYRST…YLEERYPQPA (83 aa)) folds into the GST N-terminal domain. Residues 88–211 (DPLRRARERG…HPANQPDTPA (124 aa)) form the GST C-terminal domain.

This sequence belongs to the GST superfamily. Zeta family.

It carries out the reaction 4-maleylacetoacetate = 4-fumarylacetoacetate. Its pathway is amino-acid degradation; L-phenylalanine degradation; acetoacetate and fumarate from L-phenylalanine: step 5/6. This chain is Maleylacetoacetate isomerase (maiA), found in Pseudomonas aeruginosa (strain ATCC 15692 / DSM 22644 / CIP 104116 / JCM 14847 / LMG 12228 / 1C / PRS 101 / PAO1).